The following is a 562-amino-acid chain: SPI-1 type 3 secretion system secretin (562 aa).

The signal sequence occupies residues 1–24 (MKTHILLARVLACAALVLVTPGYS).

Belongs to the bacterial secretin family. T3SS SctC subfamily. In terms of assembly, the core secretion machinery of the T3SS is composed of approximately 20 different proteins, including cytoplasmic components, a base, an export apparatus and a needle. This subunit is part of the base, which anchors the injectisome in the bacterial cell envelope. Forms a stable homooligomeric complex. The complex is composed of 15 subunits.

The protein resides in the cell outer membrane. In terms of biological role, component of the type III secretion system (T3SS), also called injectisome, which is used to inject bacterial effector proteins into eukaryotic host cells. Forms a ring-shaped multimeric structure with an apparent central pore in the outer membrane. This Salmonella typhimurium (strain LT2 / SGSC1412 / ATCC 700720) protein is SPI-1 type 3 secretion system secretin.